The primary structure comprises 59 residues: MEEPTPEPVYVDVDKGLTLACFVFLCLFLVVMIIRCAKVIMDPYSAIPTSTWEEQHLDD.

Residues 17–37 (LTLACFVFLCLFLVVMIIRCA) form a helical membrane-spanning segment.

It localises to the membrane. The chain is Cortexin domain-containing 1 protein from Homo sapiens (Human).